Reading from the N-terminus, the 420-residue chain is Protein disulfide isomerase CRELD1 (420 aa).

A signal peptide spans 1–29 (MAPWPPKGLVPAMLWGLSLFLNLPGPIWL). Over 30–362 (QPSPPPQSSP…GFFSEMTEDE (333 aa)) the chain is Extracellular. A CXXC motif is present at residues 46 to 49 (CHTC). C46 and C49 are disulfide-bonded. N79 carries N-linked (GlcNAc...) asparagine glycosylation. Positions 153–193 (LPCPGGTERPCGGYGQCEGEGTRGGSGHCDCQAGYGGEACG) constitute an EGF-like 1 domain. 3 cysteine pairs are disulfide-bonded: C155-C169, C163-C181, and C183-C192. The N-linked (GlcNAc...) asparagine glycan is linked to N205. FU repeat units follow at residues 208-256 (HLVC…GANC) and 268-315 (SYEC…EVCP). The short motif at 278–281 (CLGC) is the CXXC element. 4 cysteine pairs are disulfide-bonded: C278–C281, C309–C321, C314–C330, and C332–C343. An EGF-like 2; calcium-binding domain is found at 305 to 344 (DVDECETEVCPGENKQCENTEGGYRCICAEGYKQMEGICV). Residues 363-383 (LVVLQQMFFGIIICALATLAA) traverse the membrane as a helical segment. K384 is a topological domain (cytoplasmic). Residues 385–405 (GDLVFTAIFIGAVAAMTGYWL) traverse the membrane as a helical segment. Residues 406-420 (SERSDRVLEGFIKGR) are Extracellular-facing.

This sequence belongs to the CRELD family. In terms of tissue distribution, highly expressed in fetal lung, liver, kidney, adult heart, brain and skeletal muscle. Weakly expressed in placenta, fetal brain, and adult lung, liver, kidney and pancreas.

It is found in the membrane. It catalyses the reaction Catalyzes the rearrangement of -S-S- bonds in proteins.. Its function is as follows. Protein disulfide isomerase. Promotes the localization of acetylcholine receptors (AChRs) to the plasma membrane. This is Protein disulfide isomerase CRELD1 (CRELD1) from Homo sapiens (Human).